The chain runs to 292 residues: Ribosomal protein L11 methyltransferase (292 aa).

S-adenosyl-L-methionine-binding residues include Thr-144, Gly-165, Asp-187, and Asn-229.

Belongs to the methyltransferase superfamily. PrmA family.

It is found in the cytoplasm. It catalyses the reaction L-lysyl-[protein] + 3 S-adenosyl-L-methionine = N(6),N(6),N(6)-trimethyl-L-lysyl-[protein] + 3 S-adenosyl-L-homocysteine + 3 H(+). Functionally, methylates ribosomal protein L11. This chain is Ribosomal protein L11 methyltransferase, found in Saccharophagus degradans (strain 2-40 / ATCC 43961 / DSM 17024).